A 256-amino-acid polypeptide reads, in one-letter code: Enolase-phosphatase E1 (256 aa).

Residues D14 and E16 each contribute to the Mg(2+) site. Substrate-binding positions include 142-143 and K176; that span reads SS. D201 provides a ligand contact to Mg(2+).

This sequence belongs to the HAD-like hydrolase superfamily. MasA/MtnC family. In terms of assembly, monomer. Requires Mg(2+) as cofactor.

It is found in the cytoplasm. The protein localises to the nucleus. The enzyme catalyses 5-methylsulfanyl-2,3-dioxopentyl phosphate + H2O = 1,2-dihydroxy-5-(methylsulfanyl)pent-1-en-3-one + phosphate. Its pathway is amino-acid biosynthesis; L-methionine biosynthesis via salvage pathway; L-methionine from S-methyl-5-thio-alpha-D-ribose 1-phosphate: step 3/6. The protein operates within amino-acid biosynthesis; L-methionine biosynthesis via salvage pathway; L-methionine from S-methyl-5-thio-alpha-D-ribose 1-phosphate: step 4/6. Functionally, bifunctional enzyme that catalyzes the enolization of 2,3-diketo-5-methylthiopentyl-1-phosphate (DK-MTP-1-P) into the intermediate 2-hydroxy-3-keto-5-methylthiopentenyl-1-phosphate (HK-MTPenyl-1-P), which is then dephosphorylated to form the acireductone 1,2-dihydroxy-3-keto-5-methylthiopentene (DHK-MTPene). The sequence is that of Enolase-phosphatase E1 from Drosophila simulans (Fruit fly).